The chain runs to 142 residues: Small ribosomal subunit protein uS12 (142 aa).

The protein belongs to the universal ribosomal protein uS12 family. As to quaternary structure, part of the 30S ribosomal subunit.

In terms of biological role, with S4 and S5 plays an important role in translational accuracy. Located at the interface of the 30S and 50S subunits. In Methanosarcina barkeri (strain Fusaro / DSM 804), this protein is Small ribosomal subunit protein uS12.